The sequence spans 158 residues: Developmental pluripotency-associated protein 3 (158 aa).

Disordered regions lie at residues 1–38 (MDEPSEKVDPVVNPETQMYDGSQREDEGDSPDDSEILQ) and 54–78 (SAKPTKYHRRQRVRLQVKSQPVENR). Residues 26–35 (DEGDSPDDSE) are compositionally biased toward acidic residues. Basic residues predominate over residues 58-68 (TKYHRRQRVRL).

Its subcellular location is the nucleus. The protein resides in the cytoplasm. Primordial germ cell (PGCs)-specific protein involved in epigenetic chromatin reprogramming in the zygote following fertilization. In zygotes, DNA demethylation occurs selectively in the paternal pronucleus before the first cell division, while the adjacent maternal pronucleus and certain paternally-imprinted loci are protected from this process. Participates in protection of DNA methylation in the maternal pronucleus by preventing conversion of 5mC to 5hmC: specifically recognizes and binds histone H3 dimethylated at 'Lys-9' (H3K9me2) on maternal genome, and protects maternal genome from TET3-mediated conversion to 5hmC and subsequent DNA demethylation. Does not bind paternal chromatin, which is mainly packed into protamine and does not contain much H3K9me2 mark. Also protects imprinted loci that are marked with H3K9me2 in mature sperm from DNA demethylation in early embryogenesis. May be important for the totipotent/pluripotent states continuing through preimplantation development. Also involved in chromatin condensation in oocytogenesis. The polypeptide is Developmental pluripotency-associated protein 3 (Dppa3) (Rattus norvegicus (Rat)).